We begin with the raw amino-acid sequence, 207 residues long: Large ribosomal subunit protein bL25 (207 aa).

The disordered stretch occupies residues 182–207 (QDLGDESVQEEQAAESAEGESEGSED).

The protein belongs to the bacterial ribosomal protein bL25 family. CTC subfamily. In terms of assembly, part of the 50S ribosomal subunit; part of the 5S rRNA/L5/L18/L25 subcomplex. Contacts the 5S rRNA. Binds to the 5S rRNA independently of L5 and L18.

Functionally, this is one of the proteins that binds to the 5S RNA in the ribosome where it forms part of the central protuberance. This chain is Large ribosomal subunit protein bL25, found in Micrococcus luteus (strain ATCC 4698 / DSM 20030 / JCM 1464 / CCM 169 / CCUG 5858 / IAM 1056 / NBRC 3333 / NCIMB 9278 / NCTC 2665 / VKM Ac-2230) (Micrococcus lysodeikticus).